The sequence spans 585 residues: MGACCSCLGNRGGDGSHTQLLLAENEREAISALLQYLENRSDVDFFSNGPLRALSTLVYSENIDLQRSAALAFAEITEKDVREVNRDVLEPILILLQSADSEVQRAACGALGNLAVNTENKILIVEMGGLEPLIRQMMSTNIEVQCNAVGCITNLATQDDNKSKIAKSGALIPLTKLAKSKDIRVQRNATGALLNMTHSGENRQELVNAGAVPVLVSLLSNEDADVQYYCTTALSNIAVDEVNRKKLASTEPKLVGQLVHLMDSPSPRVQCQATLALRNLASDSGYQVEIVRAGGLPHLVQLLTCNHQPLVLAAVACIRNISIHPLNEALIIEAGFLKPLVGLLDYTDSEEIQCHAVSTLRNLAASSEKNRTALLAAGAVDKCKELVLKVPLTVQSEISACFAILALADDLKPKLYESHIIDVLIPLTFSENGEVCGNSAAALANLCSRVSNEHKQYILNNWAQPNEGIYGFLIRFLESGSPTFEHIALWTILQLLESNNTEINALIKENETILAGIKNLSASQQQIQQSQIGQTTTTTTTNITNNNTNTNTNTNTTTSTSNEDQFEDPKVELFNLTQQILQILG.

Glycine 2 is lipidated: N-myristoyl glycine. 3 S-palmitoyl cysteine lipidation sites follow: cysteine 4, cysteine 5, and cysteine 7. ARM repeat units follow at residues asparagine 39–isoleucine 76, threonine 77–valine 116, threonine 118–threonine 157, aspartate 159–histidine 198, glycine 200–valine 239, asparagine 243–serine 282, serine 284–isoleucine 323, proline 325–alanine 365, and aspartate 409–serine 448. Residues glutamine 531–asparagine 562 are compositionally biased toward low complexity. A disordered region spans residues glutamine 531 to glutamine 565.

Belongs to the beta-catenin family.

It localises to the vacuole membrane. Functions in both vacuole inheritance and protein targeting from the cytoplasm to vacuole. Vacuole inheritance has a role in the regulation of hyphal cell division. The sequence is that of Vacuolar protein 8 (VAC8) from Candida albicans (strain SC5314 / ATCC MYA-2876) (Yeast).